The sequence spans 337 residues: Alcohol dehydrogenase 1 (337 aa).

The Zn(2+) site is built by Cys-37, His-58, Cys-89, Cys-92, Cys-95, Cys-103, and Cys-145.

This sequence belongs to the zinc-containing alcohol dehydrogenase family. In terms of assembly, multimeric (with different ratios of monomers). Zn(2+) serves as cofactor.

The catalysed reaction is a primary alcohol + NAD(+) = an aldehyde + NADH + H(+). It carries out the reaction a secondary alcohol + NAD(+) = a ketone + NADH + H(+). Its pathway is alcohol metabolism; ethanol biosynthesis via fermentation pathway. Inhibited by ethanol. The sequence is that of Alcohol dehydrogenase 1 (adhA) from Zymomonas mobilis subsp. mobilis (strain ATCC 31821 / ZM4 / CP4).